We begin with the raw amino-acid sequence, 333 residues long: Holliday junction branch migration complex subunit RuvB (333 aa).

The interval 1 to 182 (MDERLLSGES…FGVLSRLEYY (182 aa)) is large ATPase domain (RuvB-L). ATP is bound by residues leucine 21, arginine 22, glycine 63, lysine 66, threonine 67, threonine 68, 129 to 131 (EDF), arginine 172, tyrosine 182, and arginine 219. Threonine 67 lines the Mg(2+) pocket. Residues 183–253 (TVDQLSAIVE…ITQMALELLQ (71 aa)) are small ATPAse domain (RuvB-S). Residues 256–333 (KLGLDHIDHK…EHFGMEIPKV (78 aa)) form a head domain (RuvB-H) region. Residues arginine 311 and arginine 316 each contribute to the DNA site.

Belongs to the RuvB family. Homohexamer. Forms an RuvA(8)-RuvB(12)-Holliday junction (HJ) complex. HJ DNA is sandwiched between 2 RuvA tetramers; dsDNA enters through RuvA and exits via RuvB. An RuvB hexamer assembles on each DNA strand where it exits the tetramer. Each RuvB hexamer is contacted by two RuvA subunits (via domain III) on 2 adjacent RuvB subunits; this complex drives branch migration. In the full resolvosome a probable DNA-RuvA(4)-RuvB(12)-RuvC(2) complex forms which resolves the HJ.

The protein resides in the cytoplasm. The catalysed reaction is ATP + H2O = ADP + phosphate + H(+). The RuvA-RuvB-RuvC complex processes Holliday junction (HJ) DNA during genetic recombination and DNA repair, while the RuvA-RuvB complex plays an important role in the rescue of blocked DNA replication forks via replication fork reversal (RFR). RuvA specifically binds to HJ cruciform DNA, conferring on it an open structure. The RuvB hexamer acts as an ATP-dependent pump, pulling dsDNA into and through the RuvAB complex. RuvB forms 2 homohexamers on either side of HJ DNA bound by 1 or 2 RuvA tetramers; 4 subunits per hexamer contact DNA at a time. Coordinated motions by a converter formed by DNA-disengaged RuvB subunits stimulates ATP hydrolysis and nucleotide exchange. Immobilization of the converter enables RuvB to convert the ATP-contained energy into a lever motion, pulling 2 nucleotides of DNA out of the RuvA tetramer per ATP hydrolyzed, thus driving DNA branch migration. The RuvB motors rotate together with the DNA substrate, which together with the progressing nucleotide cycle form the mechanistic basis for DNA recombination by continuous HJ branch migration. Branch migration allows RuvC to scan DNA until it finds its consensus sequence, where it cleaves and resolves cruciform DNA. This Bacillus cereus (strain B4264) protein is Holliday junction branch migration complex subunit RuvB.